Here is a 1807-residue protein sequence, read N- to C-terminus: Nucleoporin nup189 (1807 aa).

Residues 1–118 (MFGQNNSSGF…SGGGLFGSNT (118 aa)) are disordered. GLFG repeat units lie at residues 26–29 (GLFG) and 66–69 (GLFG). The span at 29–61 (GSNSNTPGNTLFGSQNTSTTGFGQNTTQPLFGS) shows a compositional bias: polar residues. The span at 62 to 77 (NTNGGLFGNRNNTTTT) shows a compositional bias: low complexity. The span at 78–90 (GGTGFGMSSGTGM) shows a compositional bias: gly residues. Residues 93 to 108 (QSNTPAFGGTNNATNP) are compositionally biased toward polar residues. GLFG repeat units follow at residues 112-115 (GLFG), 152-155 (GLFG), 177-180 (GLFG), 308-311 (GLFG), 335-338 (GLFG), 350-353 (GLFG), 381-384 (GLFG), 399-402 (GLFG), 435-438 (GLFG), and 521-524 (GLFG). A compositionally biased stretch (polar residues) spans 565 to 584 (PGTGLFGSTQTNNATSNTGT). Residues 565 to 685 (PGTGLFGSTQ…SSTTSQVAPT (121 aa)) form a disordered region. GLFG repeat units lie at residues 585-588 (GLFG), 611-614 (GLFG), 627-630 (GLFG), and 646-649 (GLFG). Residues 588-600 (GSNNANTTNTGGS) are compositionally biased toward low complexity. The span at 603–644 (NKPSTTTGGLFGNTTAQQPSTTTSGLFGASNTNNQAQTSNFG) shows a compositional bias: polar residues. The segment covering 653 to 663 (AGQQQQPLQAS) has biased composition (low complexity). A compositionally biased stretch (polar residues) spans 664 to 685 (IDQNPYGNNPLFSSTTSQVAPT). Phosphoserine is present on serine 724. The disordered stretch occupies residues 785 to 814 (QNGVKNGNDAKSDSKVQEKAPQNEADGSLK). Over residues 792–802 (NDAKSDSKVQE) the composition is skewed to basic and acidic residues. In terms of domain architecture, Peptidase S59 spans 822–963 (SDDYWMKPSI…GKWIFKVQHF (142 aa)). A disordered region spans residues 974-1020 (EENDMSSTSNEAGNLKKYDQPNLKVSGKNDSFVTHHTPGAFPNDSKN). The residue at position 1051 (serine 1051) is a Phosphoserine. Residues 1082 to 1104 (KENNVPLSEDDLSNSSESSNESV) are disordered. The span at 1094–1104 (SNSSESSNESV) shows a compositional bias: low complexity.

Belongs to the nucleoporin GLFG family. As to quaternary structure, interacts (via G-L-F-G repeats) with rpn15/dss1. Interacts with raf1. In terms of assembly, interacts with ned1. In terms of processing, nup189 is autocatalytically cleaved in nup98 and nup96.

The protein localises to the nucleus. The protein resides in the nuclear pore complex. Functions as a component of the nuclear pore complex (NPC). NPC components, collectively referred to as nucleoporins (NUPs), can play the role of both NPC structural components and of docking or interaction partners for transiently associated nuclear transport factors. Active directional transport is assured by both, a Phe-Gly (FG) repeat affinity gradient for these transport factors across the NPC and a transport cofactor concentration gradient across the nuclear envelope. Nup189 is autocatalytically cleaved in vivo in 2 polypeptides which assume different functions in the NPC. Nup98 as one of the FG repeat nucleoporins participates in karyopherin interactions and contains part of the autocatalytic cleavage activity. Nup96 as part of the NUP84 complex is involved in nuclear poly(A)+ RNA and tRNA export. In Schizosaccharomyces pombe (strain 972 / ATCC 24843) (Fission yeast), this protein is Nucleoporin nup189 (nup189).